Consider the following 144-residue polypeptide: Large ribosomal subunit protein uL16 (144 aa).

The segment covering 1 to 16 (MLIPKRVKYRKQHRPR) has biased composition (basic residues). Residues 1–25 (MLIPKRVKYRKQHRPRGNGGVSKGG) form a disordered region.

It belongs to the universal ribosomal protein uL16 family. As to quaternary structure, part of the 50S ribosomal subunit.

Its function is as follows. Binds 23S rRNA and is also seen to make contacts with the A and possibly P site tRNAs. The sequence is that of Large ribosomal subunit protein uL16 from Desulforamulus reducens (strain ATCC BAA-1160 / DSM 100696 / MI-1) (Desulfotomaculum reducens).